Consider the following 237-residue polypeptide: Protein XpsM (237 aa).

Residues 1-21 (MPAATWTASPSPPNWPVPMPR) form a disordered region. Pro residues predominate over residues 10–21 (PSPPNWPVPMPR).

This chain is Protein XpsM (xpsM), found in Xanthomonas campestris pv. campestris (strain ATCC 33913 / DSM 3586 / NCPPB 528 / LMG 568 / P 25).